The sequence spans 894 residues: Alanine--tRNA ligase (894 aa).

Zn(2+) is bound by residues His-587, His-591, Cys-691, and His-695. A disordered region spans residues 739–758 (AEGDRAAEEAKGRLQEERDA).

This sequence belongs to the class-II aminoacyl-tRNA synthetase family. It depends on Zn(2+) as a cofactor.

The protein localises to the cytoplasm. It catalyses the reaction tRNA(Ala) + L-alanine + ATP = L-alanyl-tRNA(Ala) + AMP + diphosphate. Catalyzes the attachment of alanine to tRNA(Ala) in a two-step reaction: alanine is first activated by ATP to form Ala-AMP and then transferred to the acceptor end of tRNA(Ala). Also edits incorrectly charged Ser-tRNA(Ala) and Gly-tRNA(Ala) via its editing domain. In Cenarchaeum symbiosum (strain A), this protein is Alanine--tRNA ligase.